The following is a 247-amino-acid chain: tRNA (guanine-N(1)-)-methyltransferase (247 aa).

Residues Gly-112 and 131 to 136 (LGDFVL) contribute to the S-adenosyl-L-methionine site.

Belongs to the RNA methyltransferase TrmD family. As to quaternary structure, homodimer.

Its subcellular location is the cytoplasm. It catalyses the reaction guanosine(37) in tRNA + S-adenosyl-L-methionine = N(1)-methylguanosine(37) in tRNA + S-adenosyl-L-homocysteine + H(+). In terms of biological role, specifically methylates guanosine-37 in various tRNAs. The sequence is that of tRNA (guanine-N(1)-)-methyltransferase from Syntrophotalea carbinolica (strain DSM 2380 / NBRC 103641 / GraBd1) (Pelobacter carbinolicus).